The following is a 327-amino-acid chain: Serpentine receptor class gamma-2 (327 aa).

6 helical membrane-spanning segments follow: residues 35–55 (LVQFVYLLPAAMLHARILYIL), 70–90 (ILFIMSCIACFTLVVQDIFFA), 157–177 (MKYAIALVILTPFLFIWNIII), 181–203 (LPVYTFGGFYIGYERVVIWATMT), 244–264 (IASFLISSCFLGTAAAESLFA), and 277–297 (FLLPISWDILNVGTPIVMVMA).

This sequence belongs to the nematode receptor-like protein srg family.

The protein resides in the membrane. In Caenorhabditis elegans, this protein is Serpentine receptor class gamma-2 (srg-2).